A 154-amino-acid polypeptide reads, in one-letter code: Ribonuclease K6 (154 aa).

Positions 1 to 27 (MGPHLLGRSSLLLLLLGMWWSVRPLCA) are cleaved as a signal peptide. The active-site Proton acceptor is His-42. Cystine bridges form between Cys-50–Cys-108, Cys-64–Cys-118, Cys-82–Cys-133, and Cys-89–Cys-96. Residue Asn-59 is glycosylated (N-linked (GlcNAc...) asparagine). Substrate-binding positions include 65-69 (KPENT) and Lys-90. Asn-104 carries N-linked (GlcNAc...) asparagine glycosylation. His-149 functions as the Proton donor in the catalytic mechanism.

The protein belongs to the pancreatic ribonuclease family. In terms of assembly, interacts (via N-terminus) with bacterial lipopolysaccharide (LPS). In terms of tissue distribution, kidney (at protein level).

The protein localises to the secreted. It localises to the lysosome. It is found in the cytoplasmic granule. Ribonuclease which shows a preference for the pyrimidines uridine and cytosine. Has potent antimicrobial activity against a range of Gram-positive and Gram-negative bacteria, including P.aeruginosa, A.baumanii, M.luteus, S.aureus, E.faecalis, E.faecium, S.saprophyticus and E.coli. Causes loss of bacterial membrane integrity, and also promotes agglutination of Gram-negative bacteria. Probably contributes to urinary tract sterility. Bactericidal activity is independent of RNase activity. The protein is Ribonuclease K6 (RNASE6) of Bos taurus (Bovine).